Consider the following 256-residue polypeptide: Enkurin (256 aa).

A disordered region spans residues 48–92 (TMGPAKLEVPSPKDFLKKHSKEKTLPPKKKFDRHEPKKPPVPLRT). A compositionally biased stretch (basic and acidic residues) spans 61-72 (DFLKKHSKEKTL). The SH3-binding signature appears at 83-89 (PKKPPVP). One can recognise an Enkurin domain in the interval 160-252 (KRNEEVKKAQ…VLEKHKIIYI (93 aa)). Residues 176–187 (IQENLRKAAMKR) enclose the IQ domain.

Microtubule inner protein component of sperm flagellar doublet microtubules. Binds calmodulin via its IQ domain. Interacts with TRPC1, TRPC2, TRPC5, but not TRPC3. Interacts with CFAP45.

It localises to the cytoplasm. The protein resides in the cytoskeleton. The protein localises to the cilium axoneme. It is found in the flagellum axoneme. Its function is as follows. Adapter that functions to localize a calcium-sensitive signal transduction machinery in sperm to a calcium-permeable ion channel. Microtubule inner protein (MIP) part of the dynein-decorated doublet microtubules (DMTs) in cilia axoneme, which is required for motile cilia beating. This is Enkurin (ENKUR) from Sus scrofa (Pig).